A 780-amino-acid chain; its full sequence is LPS-assembly protein LptD (780 aa).

An N-terminal signal peptide occupies residues 1–24 (MKKRLPTLLASLIGSALYSQQALA).

Belongs to the LptD family. In terms of assembly, component of the lipopolysaccharide transport and assembly complex. Interacts with LptE and LptA.

The protein resides in the cell outer membrane. Functionally, together with LptE, is involved in the assembly of lipopolysaccharide (LPS) at the surface of the outer membrane. The chain is LPS-assembly protein LptD from Sodalis glossinidius (strain morsitans).